Consider the following 220-residue polypeptide: Deoxyribose-phosphate aldolase (220 aa).

Catalysis depends on aspartate 89, which acts as the Proton donor/acceptor. The active-site Schiff-base intermediate with acetaldehyde is lysine 151. The active-site Proton donor/acceptor is lysine 180.

The protein belongs to the DeoC/FbaB aldolase family. DeoC type 1 subfamily.

The protein localises to the cytoplasm. It carries out the reaction 2-deoxy-D-ribose 5-phosphate = D-glyceraldehyde 3-phosphate + acetaldehyde. Its pathway is carbohydrate degradation; 2-deoxy-D-ribose 1-phosphate degradation; D-glyceraldehyde 3-phosphate and acetaldehyde from 2-deoxy-alpha-D-ribose 1-phosphate: step 2/2. In terms of biological role, catalyzes a reversible aldol reaction between acetaldehyde and D-glyceraldehyde 3-phosphate to generate 2-deoxy-D-ribose 5-phosphate. The sequence is that of Deoxyribose-phosphate aldolase from Thermus thermophilus (strain ATCC BAA-163 / DSM 7039 / HB27).